Here is a 286-residue protein sequence, read N- to C-terminus: MAENTMWHETLHDQFGQYFAVDNVLYHEKTDHQDLIIFENAAFGRVMALDGVVQTTERDEFIYHEMMTHVPLLAHGHAKHVLIIGGGDGAMLREVTRHKNVETITMVEIDAGVVSFCRQYLPNHNAGSYDDPRFTLVIDDGVNFVNQTHQTFDVIISDCTDPIGPGESLFTSAFYEGCKRCLNPGGIFVAQNGVCFLQQDEALDSHRKLSHYFSDVGFYQAAIPTYYGGIMTFAWATDNDALRHLSSEIIQARFHAAGLKCRYYNSAIHAAAFALPQYLHDALSAQ.

Residues 5–238 (TMWHETLHDQ…GIMTFAWATD (234 aa)) form the PABS domain. An S-methyl-5'-thioadenosine-binding site is contributed by glutamine 33. Spermidine contacts are provided by histidine 64 and aspartate 88. S-methyl-5'-thioadenosine contacts are provided by residues glutamate 108 and 140-141 (DG). Aspartate 158 functions as the Proton acceptor in the catalytic mechanism. 158 to 161 (DCTD) contacts spermidine. Position 165 (proline 165) interacts with S-methyl-5'-thioadenosine.

It belongs to the spermidine/spermine synthase family. As to quaternary structure, homodimer or homotetramer.

It localises to the cytoplasm. The catalysed reaction is S-adenosyl 3-(methylsulfanyl)propylamine + putrescine = S-methyl-5'-thioadenosine + spermidine + H(+). The protein operates within amine and polyamine biosynthesis; spermidine biosynthesis; spermidine from putrescine: step 1/1. Catalyzes the irreversible transfer of a propylamine group from the amino donor S-adenosylmethioninamine (decarboxy-AdoMet) to putrescine (1,4-diaminobutane) to yield spermidine. The chain is Polyamine aminopropyltransferase from Salmonella typhi.